Reading from the N-terminus, the 688-residue chain is Lipase (688 aa).

Residues 1–35 (MKTRQNKYSIRKFSVGASSILIAALLFMGGGSAQA) form the signal peptide. Positions 31 to 309 (GSAQAAEQQQ…KSAKQKQYKN (279 aa)) are disordered. A propeptide spans 36-302 (AEQQQDKGTV…KNEDQTNKSA (267 aa)) (removed in mature form). Polar residues predominate over residues 45-54 (VENSTTQSIG). Over residues 68–79 (NKNVNEKSNVNS) the composition is skewed to low complexity. Composition is skewed to basic and acidic residues over residues 84–95 (ESLHNETPKNED) and 103–143 (SQND…KHAS). Polar residues predominate over residues 144–172 (ENNQTLHSKAAQSNEDVKTKPSQLDNTAA). Over residues 173-183 (KQEDSQKENLS) the composition is skewed to basic and acidic residues. Positions 184 to 211 (KQDTQSSKTTDLLRATAQNQSKDSQSTE) are enriched in polar residues. Residues 240–267 (SKEEPLKVDKQANPTTDKDKSSKNDKGS) are compositionally biased toward basic and acidic residues. The span at 274–289 (LESNAVATTNKQSKQQ) shows a compositional bias: polar residues. The active-site Nucleophile is the S418. D609 serves as the catalytic Charge relay system. D647 is a Ca(2+) binding site. Residue H648 is the Charge relay system of the active site. Ca(2+)-binding residues include D650, D655, and D658.

This sequence belongs to the AB hydrolase superfamily. Lipase family.

It is found in the secreted. The enzyme catalyses a triacylglycerol + H2O = a diacylglycerol + a fatty acid + H(+). This is Lipase (lip) from Staphylococcus epidermidis (strain ATCC 12228 / FDA PCI 1200).